A 402-amino-acid polypeptide reads, in one-letter code: Pentalenic acid synthase (402 aa).

Positions 1–28 (MTEPGTSVSAPVAFPQDRTCPYDPPTAY) are disordered. Position 351 (C351) interacts with heme.

The protein belongs to the cytochrome P450 family. The cofactor is heme.

It carries out the reaction 1-deoxypentalenate + reduced 2[4Fe-4S]-[ferredoxin] + O2 + 2 H(+) = pentalenate + oxidized 2[4Fe-4S]-[ferredoxin] + H2O. It functions in the pathway antibiotic biosynthesis; neopentalenolactone biosynthesis. Functionally, catalyzes the conversion of 1-deoxypentalenic acid to pentalenic acid in the biosynthesis of neopentalenolactone antibiotic. The chain is Pentalenic acid synthase (cyp28) from Streptomyces avermitilis (strain ATCC 31267 / DSM 46492 / JCM 5070 / NBRC 14893 / NCIMB 12804 / NRRL 8165 / MA-4680).